Here is a 136-residue protein sequence, read N- to C-terminus: Nucleoside diphosphate kinase (136 aa).

Positions 10, 58, 86, 92, 104, and 114 each coordinate ATP. His-117 serves as the catalytic Pros-phosphohistidine intermediate.

Belongs to the NDK family. As to quaternary structure, homotetramer. The cofactor is Mg(2+).

Its subcellular location is the cytoplasm. It carries out the reaction a 2'-deoxyribonucleoside 5'-diphosphate + ATP = a 2'-deoxyribonucleoside 5'-triphosphate + ADP. It catalyses the reaction a ribonucleoside 5'-diphosphate + ATP = a ribonucleoside 5'-triphosphate + ADP. Its function is as follows. Major role in the synthesis of nucleoside triphosphates other than ATP. The ATP gamma phosphate is transferred to the NDP beta phosphate via a ping-pong mechanism, using a phosphorylated active-site intermediate. In Saccharopolyspora erythraea (strain ATCC 11635 / DSM 40517 / JCM 4748 / NBRC 13426 / NCIMB 8594 / NRRL 2338), this protein is Nucleoside diphosphate kinase.